A 581-amino-acid polypeptide reads, in one-letter code: MCEKARVIVRMLQGCNSMKKLRKIHSHVIINGLQHHPSIFNHLLRFCAVSVTGSLSHAQLLFDHFDSDPSTSDWNYLIRGFSNSSSPLNSILFYNRMLLSSVSRPDLFTFNFALKSCERIKSIPKCLEIHGSVIRSGFLDDAIVATSLVRCYSANGSVEIASKVFDEMPVRDLVSWNVMICCFSHVGLHNQALSMYKRMGNEGVCGDSYTLVALLSSCAHVSALNMGVMLHRIACDIRCESCVFVSNALIDMYAKCGSLENAIGVFNGMRKRDVLTWNSMIIGYGVHGHGVEAISFFRKMVASGVRPNAITFLGLLLGCSHQGLVKEGVEHFEIMSSQFHLTPNVKHYGCMVDLYGRAGQLENSLEMIYASSCHEDPVLWRTLLGSCKIHRNLELGEVAMKKLVQLEAFNAGDYVLMTSIYSAANDAQAFASMRKLIRSHDLQTVPGWSWIEIGDQVHKFVVDDKMHPESAVIYSELGEVINRAILAGYKPEDSNRTAPTLSDRCLGSADTSHSEKLAIAYGLMRTTAGTTLRITKNLRVCRDCHSFTKYVSKAFNREIIVRDRVRFHHFADGICSCNDYW.

PPR repeat units follow at residues 70–104, 106–140, 141–171, 172–206, 207–241, 242–272, 273–307, 308–338, and 344–378; these read STSD…SVSR, DLFT…GFLD, DAIV…MPVR, DLVS…GVCG, DSYT…RCES, CVFV…MRKR, DVLT…GVRP, NAIT…MSSQ, and NVKH…EDPV. The interval 379–454 is type E motif; it reads LWRTLLGSCK…VPGWSWIEIG (76 aa). The tract at residues 455-485 is type E(+) motif; the sequence is DQVHKFVVDDKMHPESAVIYSELGEVINRAI. Positions 486–581 are type DYW motif; the sequence is LAGYKPEDSN…DGICSCNDYW (96 aa).

Belongs to the PPR family. PCMP-H subfamily.

This Arabidopsis thaliana (Mouse-ear cress) protein is Pentatricopeptide repeat-containing protein At3g56550 (PCMP-H80).